We begin with the raw amino-acid sequence, 122 residues long: Large ribosomal subunit protein bL17 (122 aa).

It belongs to the bacterial ribosomal protein bL17 family. As to quaternary structure, part of the 50S ribosomal subunit. Contacts protein L32.

In Staphylococcus carnosus (strain TM300), this protein is Large ribosomal subunit protein bL17.